The following is an 881-amino-acid chain: Ribonucleoside-diphosphate reductase large subunit (881 aa).

The 92-residue stretch at 69-160 (TIYLDHNGSI…MTNLHDNTSD (92 aa)) folds into the ATP-cone domain. Substrate-binding positions include threonine 271, 286-287 (SC), glycine 315, 493-497 (NLCCE), and 675-679 (PTAST). A disulfide bridge connects residues cysteine 287 and cysteine 510. Asparagine 493 serves as the catalytic Proton acceptor. Catalysis depends on cysteine 495, which acts as the Cysteine radical intermediate. Catalysis depends on glutamate 497, which acts as the Proton acceptor.

Belongs to the ribonucleoside diphosphate reductase large chain family. In terms of assembly, heterotetramer composed of a homodimer of the large subunit (R1) and a homodimer of the small subunit (R2). Larger multisubunit protein complex are also active, composed of (R1)n(R2)n.

The enzyme catalyses a 2'-deoxyribonucleoside 5'-diphosphate + [thioredoxin]-disulfide + H2O = a ribonucleoside 5'-diphosphate + [thioredoxin]-dithiol. Under complex allosteric control mediated by deoxynucleoside triphosphates and ATP binding. The type of nucleotide bound at the specificity site determines substrate preference. It seems probable that ATP makes the enzyme reduce CDP and UDP, dGTP favors ADP reduction and dTTP favors GDP reduction. Its function is as follows. Ribonucleoside-diphosphate reductase holoenzyme provides the precursors necessary for viral DNA synthesis. Allows virus growth in non-dividing cells. Catalyzes the biosynthesis of deoxyribonucleotides from the corresponding ribonucleotides. The sequence is that of Ribonucleoside-diphosphate reductase large subunit (RNR1) from Acanthamoeba polyphaga mimivirus (APMV).